A 601-amino-acid chain; its full sequence is Glutamyl-tRNA(Gln) amidotransferase subunit B, mitochondrial (601 aa).

Residues Met-1 to Ser-55 constitute a mitochondrion transit peptide.

The protein belongs to the GatB/GatE family. GatB subfamily. Subunit of the heterotrimeric GatCAB amidotransferase (AdT) complex, composed of A, B and C subunits.

The protein resides in the mitochondrion. The catalysed reaction is L-glutamyl-tRNA(Gln) + L-glutamine + ATP + H2O = L-glutaminyl-tRNA(Gln) + L-glutamate + ADP + phosphate + H(+). Functionally, allows the formation of correctly charged Gln-tRNA(Gln) through the transamidation of misacylated Glu-tRNA(Gln) in the mitochondria. The reaction takes place in the presence of glutamine and ATP through an activated gamma-phospho-Glu-tRNA(Gln). The polypeptide is Glutamyl-tRNA(Gln) amidotransferase subunit B, mitochondrial (Aspergillus niger (strain ATCC MYA-4892 / CBS 513.88 / FGSC A1513)).